A 301-amino-acid polypeptide reads, in one-letter code: Probable alpha-L-glutamate ligase (301 aa).

The region spanning 104 to 287 (LQLLSRRGIG…VAGMIIEYLE (184 aa)) is the ATP-grasp domain. ATP is bound by residues Lys-141, 178 to 179 (EY), Asp-187, and 211 to 213 (RSN). The Mg(2+) site is built by Asp-248, Glu-260, and Asn-262. The Mn(2+) site is built by Asp-248, Glu-260, and Asn-262.

This sequence belongs to the RimK family. It depends on Mg(2+) as a cofactor. The cofactor is Mn(2+).

This chain is Probable alpha-L-glutamate ligase, found in Pseudomonas savastanoi pv. phaseolicola (strain 1448A / Race 6) (Pseudomonas syringae pv. phaseolicola (strain 1448A / Race 6)).